The chain runs to 180 residues: MAQGEVLEFEEIVRTRQDALLRTPPGLVPDPVDAQDLLQTALARTYGRWEGIADKRLADAYLRRVMINTRTEWWRARKLEEVPTEQLPDARVEDSTEQHADRALLMDAMKVLAPKQRSVVVLRHWEQMSTEETAAALGMSAGTVKSTLHRALARLREELETRDLDARALEREERERCAAA.

The short motif at D36–W49 is the Polymerase core binding element. A DNA-binding region (H-T-H motif) is located at residues T130–H149.

The protein belongs to the sigma-70 factor family. ECF subfamily.

It localises to the cytoplasm. Sigma factors are initiation factors that promote the attachment of RNA polymerase to specific initiation sites and are then released. This sigma factor is required for the synthesis of the antibiotic actinomycin. This Streptomyces antibioticus protein is RNA polymerase sigma-E factor (sigE).